Here is a 125-residue protein sequence, read N- to C-terminus: MFGDMIELFKPKKELPAVRKCSVINGDVKTFGKAYNDIKLAGKGSKLLKQTSDFSDESSRSDSSSVTNENEVSKAANTRLLHLPMPVNKIKAIALEHELLIKMREIFSEAAKLLESYVALRASVN.

The tract at residues 50 to 73 (QTSDFSDESSRSDSSSVTNENEVS) is disordered.

This is an uncharacterized protein from Microplitis demolitor (Parasitoid wasp).